A 308-amino-acid polypeptide reads, in one-letter code: Elongation factor Ts (308 aa).

The interval 80 to 83 (TDFV) is involved in Mg(2+) ion dislocation from EF-Tu.

This sequence belongs to the EF-Ts family.

It localises to the cytoplasm. Functionally, associates with the EF-Tu.GDP complex and induces the exchange of GDP to GTP. It remains bound to the aminoacyl-tRNA.EF-Tu.GTP complex up to the GTP hydrolysis stage on the ribosome. This chain is Elongation factor Ts, found in Rhodopseudomonas palustris (strain ATCC BAA-98 / CGA009).